The chain runs to 74 residues: Protein SspS (74 aa).

Belongs to the alpha/beta-type SASP family.

In Streptococcus pyogenes, this protein is Protein SspS (sspS).